The chain runs to 187 residues: Elongation factor P (187 aa).

Belongs to the elongation factor P family.

The protein localises to the cytoplasm. It participates in protein biosynthesis; polypeptide chain elongation. In terms of biological role, involved in peptide bond synthesis. Stimulates efficient translation and peptide-bond synthesis on native or reconstituted 70S ribosomes in vitro. Probably functions indirectly by altering the affinity of the ribosome for aminoacyl-tRNA, thus increasing their reactivity as acceptors for peptidyl transferase. The sequence is that of Elongation factor P from Brachyspira hyodysenteriae (strain ATCC 49526 / WA1).